The chain runs to 369 residues: Peptide chain release factor 2 (369 aa).

Gln250 bears the N5-methylglutamine mark.

The protein belongs to the prokaryotic/mitochondrial release factor family. Methylated by PrmC. Methylation increases the termination efficiency of RF2.

It is found in the cytoplasm. Its function is as follows. Peptide chain release factor 2 directs the termination of translation in response to the peptide chain termination codons UGA and UAA. The sequence is that of Peptide chain release factor 2 (prfB) from Rickettsia typhi (strain ATCC VR-144 / Wilmington).